A 510-amino-acid chain; its full sequence is Probable cytochrome P450 4aa1 (510 aa).

Cys-450 serves as a coordination point for heme.

Belongs to the cytochrome P450 family. Requires heme as cofactor.

Its subcellular location is the endoplasmic reticulum membrane. It localises to the microsome membrane. May be involved in the metabolism of insect hormones and in the breakdown of synthetic insecticides. The protein is Probable cytochrome P450 4aa1 (Cyp4aa1) of Drosophila melanogaster (Fruit fly).